The sequence spans 262 residues: MATASLVPTSKIFSVSPKSSASIKARSRVVVASSQQQQQPRRRELLLKSAVAIPAILQLKEAPISAAREVEVGSYLPLSPSDPSFVLFKAKPSDTPALRAGNVQPYQFVLPPNWKQLRIANILSGNYCQPKCAEPWIEVKFENEKQGKVQVVASPLIRLTNKPNATIEDLGEPEKVIASLGPFVTGNSYDSDELLKTSIEKIGDQTYYKYVLETPFALTGSHNLAKATAKGSTVVLFVVSATEKQWQSSQKTLEAILDSFQL.

C128 and C132 are disulfide-bonded.

Belongs to the PsbP family.

The protein localises to the plastid. The protein resides in the chloroplast thylakoid lumen. In terms of biological role, may be involved in the redox regulation of photosystem II. The sequence is that of PsbP domain-containing protein 6, chloroplastic (PPD6) from Arabidopsis thaliana (Mouse-ear cress).